We begin with the raw amino-acid sequence, 343 residues long: Cyclin-Y-like protein 1 (343 aa).

The segment at 1–48 is disordered; it reads MGNTVTCCVSPDASPKAGRDRAVTERGEPYQAQVELQETDPGPHLQHI. The span at 17 to 28 shows a compositional bias: basic and acidic residues; it reads AGRDRAVTERGE. The Cyclin N-terminal domain maps to 145–267; that stretch reads EIFDEKLHPL…FLELLQFNIN (123 aa).

It belongs to the cyclin family. Cyclin Y subfamily.

It localises to the cell membrane. In terms of biological role, key regulator of Wnt signaling implicated in various biological processes, such as embryonic neurogenesis. In Xenopus tropicalis (Western clawed frog), this protein is Cyclin-Y-like protein 1 (ccnyl1).